The chain runs to 294 residues: 4-hydroxy-tetrahydrodipicolinate synthase (294 aa).

Pyruvate is bound at residue Thr-47. Tyr-135 acts as the Proton donor/acceptor in catalysis. The Schiff-base intermediate with substrate role is filled by Lys-163. Ile-205 contributes to the pyruvate binding site.

The protein belongs to the DapA family. Homotetramer; dimer of dimers.

Its subcellular location is the cytoplasm. The catalysed reaction is L-aspartate 4-semialdehyde + pyruvate = (2S,4S)-4-hydroxy-2,3,4,5-tetrahydrodipicolinate + H2O + H(+). It functions in the pathway amino-acid biosynthesis; L-lysine biosynthesis via DAP pathway; (S)-tetrahydrodipicolinate from L-aspartate: step 3/4. Its function is as follows. Catalyzes the condensation of (S)-aspartate-beta-semialdehyde [(S)-ASA] and pyruvate to 4-hydroxy-tetrahydrodipicolinate (HTPA). In Rickettsia prowazekii (strain Madrid E), this protein is 4-hydroxy-tetrahydrodipicolinate synthase.